The chain runs to 537 residues: Pentatricopeptide repeat-containing protein At4g32450, mitochondrial (537 aa).

A mitochondrion-targeting transit peptide spans Met1–Asn110. The segment covering Trp113–Phe140 has biased composition (polar residues). The tract at residues Trp113–Ser148 is disordered. PPR repeat units lie at residues Ser145–Val179, Asp180–Ser210, Asp215–Thr249, Trp250–Pro280, Asp281–Pro316, and Cys317–Asn347. The interval Tyr412–Ile442 is type E(+) motif. The interval Glu443–Trp537 is type DYW motif.

Belongs to the PPR family. PCMP-H subfamily.

The protein localises to the mitochondrion. The protein is Pentatricopeptide repeat-containing protein At4g32450, mitochondrial (PCMP-H63) of Arabidopsis thaliana (Mouse-ear cress).